Here is a 501-residue protein sequence, read N- to C-terminus: NAD(P)H-quinone oxidoreductase chain 4, chloroplastic (501 aa).

14 helical membrane passes run 4–24, 35–55, 87–107, 113–133, 134–154, 167–187, 211–231, 242–262, 274–294, 310–330, 331–351, 386–406, 416–436, and 464–484; these read FPWL…IPFF, YTLG…CYYF, IGLI…AWPV, LFYF…ASQD, ILLF…LLCI, FILY…TMGF, IILY…FPLH, HYST…YGLI, SIFA…AALI, ISHM…GLNG, AILQ…LAGI, LALP…GIVV, ILVT…LLSM, and IFIL…PNSV.

The protein belongs to the complex I subunit 4 family.

Its subcellular location is the plastid. It is found in the chloroplast thylakoid membrane. The enzyme catalyses a plastoquinone + NADH + (n+1) H(+)(in) = a plastoquinol + NAD(+) + n H(+)(out). It catalyses the reaction a plastoquinone + NADPH + (n+1) H(+)(in) = a plastoquinol + NADP(+) + n H(+)(out). The polypeptide is NAD(P)H-quinone oxidoreductase chain 4, chloroplastic (Physcomitrium patens (Spreading-leaved earth moss)).